A 596-amino-acid chain; its full sequence is MECLIIAEDIIQKVKDLNDIVDIVSEKVKLKRTGRNYSGLCPFHHEKTPSFSVSQDKQIYKCFGCGEAGNVITFVMKTKNFSFVEAVKYLADKVNITIDDNKDKYYAKNKEKYDKLYSMNVEAARYFFRNLDSNSKAKKYFLDRGINQKTMRRFGLGYAKDDWRQLLSFMKSKGYTELELIEAGLIVQKNKAVYDRFRNRVIFPVFDYKGKVIGFGGRVLDDSKPKYLNSPETKIFKKGTNLYGLNFAVKNNIGDTIIIVEGYMDCISLHQYGINNVVASLGTALTKDQAKLLKRYASKVVISYDADTAGQAATLRGFDILREAGFDIKIIKIPDGKDPDEFVRKNGKEAFMRLVENAVSIIDYRINRAFENVNLKDSESVIKYVKDISEIIEELDPVEKDVYIKKISDKTGIREQAIYDLISTDIQKSGNNIEKMNKNSNYGQNLYVESAHVKSERYLLRLMIEHKDIRSYIESKISADDLIMESHKKIYNIILNFEDNLSSDLKSKFGFIESRCDDGESSSEIVKIEEQNIMLSENNVKDLVDDFITNIKKFRLEESKKKIMSEIKGLEEKGLFDETIELIKRMEEIQNQLDNL.

Residues 41-65 form a CHC2-type zinc finger; the sequence is CPFHHEKTPSFSVSQDKQIYKCFGC. Residues 255–336 form the Toprim domain; that stretch reads DTIIIVEGYM…DIKIIKIPDG (82 aa). Mg(2+)-binding residues include Glu-261, Asp-305, and Asp-307.

This sequence belongs to the DnaG primase family. As to quaternary structure, monomer. Interacts with DnaB. Zn(2+) is required as a cofactor. It depends on Mg(2+) as a cofactor.

The enzyme catalyses ssDNA + n NTP = ssDNA/pppN(pN)n-1 hybrid + (n-1) diphosphate.. RNA polymerase that catalyzes the synthesis of short RNA molecules used as primers for DNA polymerase during DNA replication. The protein is DNA primase of Clostridium acetobutylicum (strain ATCC 824 / DSM 792 / JCM 1419 / IAM 19013 / LMG 5710 / NBRC 13948 / NRRL B-527 / VKM B-1787 / 2291 / W).